The sequence spans 212 residues: Riboflavin synthase (212 aa).

Lumazine-binding repeat units lie at residues 1-97 and 98-195; these read MFTG…VGGH and LVSG…VDSV. 2,4-dihydroxypteridine is bound by residues 4–6, 48–50, 62–67, 101–103, Lys137, 146–148, and 160–165; these read GIV, CLT, DIVEET, GHI, SLT, and FLIPET.

Homotrimer.

The enzyme catalyses 2 6,7-dimethyl-8-(1-D-ribityl)lumazine + H(+) = 5-amino-6-(D-ribitylamino)uracil + riboflavin. The protein operates within cofactor biosynthesis; riboflavin biosynthesis; riboflavin from 2-hydroxy-3-oxobutyl phosphate and 5-amino-6-(D-ribitylamino)uracil: step 2/2. Catalyzes the dismutation of two molecules of 6,7-dimethyl-8-ribityllumazine, resulting in the formation of riboflavin and 5-amino-6-(D-ribitylamino)uracil. This Buchnera aphidicola subsp. Baizongia pistaciae (strain Bp) protein is Riboflavin synthase (ribE).